Here is a 211-residue protein sequence, read N- to C-terminus: Flagellar calcium-binding protein (211 aa).

A disordered region spans residues 1–29 (MGACGSKGSTSDKGLASDKDGKKAKDRKE). Residues 15–29 (LASDKDGKKAKDRKE) are compositionally biased toward basic and acidic residues. EF-hand domains lie at 45–80 (EAKQ…VLKL), 81–116 (DEFT…FVEF), 127–162 (YDFF…LEAW), and 164–199 (AKVE…VKLD). 5 residues coordinate Ca(2+): Asp58, Asn60, Thr62, Lys64, and Glu69. Residues Asp140, Ser142, Asn144, Glu151, Asp177, Asn179, Thr181, Ser183, and Glu188 each contribute to the Ca(2+) site.

The protein belongs to the calflagin family.

The protein resides in the cell projection. It localises to the cilium. Its subcellular location is the flagellum. Its function is as follows. May contribute to the rapid motility of the trypanosomes, playing a role either in flagellar structure or in calcium metabolism. Could alternate between a GDP-bound inactive form to a calcium/GTP-bound active form. The sequence is that of Flagellar calcium-binding protein (FCABP) from Trypanosoma cruzi.